We begin with the raw amino-acid sequence, 82 residues long: MNPLIAAASVVAAGLSVGLAAIGPGMGQGTAAGYAVEGIARQPEAEGKIRGALLLSFAFMESLTIYGLVVALALLFANPFAS.

2 consecutive transmembrane segments (helical) span residues 3-23 and 57-77; these read PLIAAASVVAAGLSVGLAAIG and FAFMESLTIYGLVVALALLFA.

The protein belongs to the ATPase C chain family. In terms of assembly, F-type ATPases have 2 components, F(1) - the catalytic core - and F(0) - the membrane proton channel. F(1) has five subunits: alpha(3), beta(3), gamma(1), delta(1), epsilon(1). F(0) has four main subunits: a(1), b(1), b'(1) and c(10-14). The alpha and beta chains form an alternating ring which encloses part of the gamma chain. F(1) is attached to F(0) by a central stalk formed by the gamma and epsilon chains, while a peripheral stalk is formed by the delta, b and b' chains.

Its subcellular location is the plastid. It localises to the chloroplast thylakoid membrane. Its function is as follows. F(1)F(0) ATP synthase produces ATP from ADP in the presence of a proton or sodium gradient. F-type ATPases consist of two structural domains, F(1) containing the extramembraneous catalytic core and F(0) containing the membrane proton channel, linked together by a central stalk and a peripheral stalk. During catalysis, ATP synthesis in the catalytic domain of F(1) is coupled via a rotary mechanism of the central stalk subunits to proton translocation. Functionally, key component of the F(0) channel; it plays a direct role in translocation across the membrane. A homomeric c-ring of between 10-14 subunits forms the central stalk rotor element with the F(1) delta and epsilon subunits. This is ATP synthase subunit c, chloroplastic from Oltmannsiellopsis viridis (Marine flagellate).